The sequence spans 261 residues: Carnitinyl-CoA dehydratase (261 aa).

Glu111 serves as the catalytic Nucleophile. The active-site Proton acceptor is the Glu131.

The protein belongs to the enoyl-CoA hydratase/isomerase family.

It catalyses the reaction (R)-carnitinyl-CoA = crotonobetainyl-CoA + H2O. The protein operates within amine and polyamine metabolism; carnitine metabolism. In terms of biological role, catalyzes the reversible dehydration of L-carnitinyl-CoA to crotonobetainyl-CoA. This is Carnitinyl-CoA dehydratase from Salmonella typhimurium (strain LT2 / SGSC1412 / ATCC 700720).